Reading from the N-terminus, the 1165-residue chain is Leptin receptor (1165 aa).

An N-terminal signal peptide occupies residues 1–21; the sequence is MICQKFCVVLLHWEFIYVITA. Topologically, residues 22–839 are extracellular; the sequence is FNLSYPITPW…QDDIEKHQSD (818 aa). Residues N23, N41, N56, N73, N81, and N98 are each glycosylated (N-linked (GlcNAc...) asparagine). 5 disulfides stabilise this stretch: C37-C90, C89-C99, C131-C142, C186-C196, and C188-C193. N187 is a glycosylation site (N-linked (GlcNAc...) asparagine). 4 N-linked (GlcNAc...) asparagine glycosylation sites follow: N206, N276, N347, and N397. A Fibronectin type-III 1 domain is found at 239–333; it reads PPLGLHMEIT…TPRVFTTQDV (95 aa). Positions 331–429 constitute an Ig-like domain; sequence QDVIYFPPKI…HRYAELYVID (99 aa). Intrachain disulfides connect C352/C412, C413/C418, C436/C447, C473/C528, and C488/C498. Residues 467-484 are leptin-binding; that stretch reads HRSSLYCSDIPSIHPISE. N-linked (GlcNAc...) asparagine glycans are attached at residues N516, N624, N659, N688, N697, N728, and N750. Fibronectin type-III domains follow at residues 539 to 634, 639 to 732, and 740 to 833; these read PPSS…TVVM, PMRG…LTFS, and IVQS…QDDI. A WSXWS motif motif is present at residues 622–626; that stretch reads WSNWS. Residues 840-862 form a helical membrane-spanning segment; sequence AGLYVIVPVIISSSILLLGTLLI. The Cytoplasmic segment spans residues 863–1165; sequence SHQRMKKLFW…MENKMCDLTV (303 aa). The Box 1 motif signature appears at 871 to 879; that stretch reads FWEDVPNPK. Residue S882 is modified to Phosphoserine. Residues 893-898 form a required for JAK2 activation region; the sequence is ETFEHL. Residues 898 to 906 are required for STAT3 phosphorylation; the sequence is LFIKHTASV. Y986 carries the phosphotyrosine; by JAK2 modification. Y1079 bears the Phosphotyrosine mark. A Phosphotyrosine; by JAK2 modification is found at Y1141.

Belongs to the type I cytokine receptor family. Type 2 subfamily. Present as a mixture of monomers and dimers. The phosphorylated receptor binds a number of SH2 domain-containing proteins such as JAK2, STAT3, PTPN11, and SOCS3. Interaction with SOCS3 inhibits JAK/STAT signaling and MAPK cascade. On ligand binding, phosphorylated on two conserved C-terminal tyrosine residues (isoform B only) by JAK2. Tyr-986 is required for complete binding and activation of PTPN11, ERK/FOS activation,for interaction with SOCS3 and SOCS3 mediated inhibition of leptin signaling. Phosphorylation on Tyr-1141 is required for STAT3 binding/activation. Phosphorylation of Tyr-1079 has a more accessory role. In terms of tissue distribution, isoform A is expressed in fetal liver and in hematopoietic tissues and choroid plexus. In adults highest expression in heart, liver, small intestine, prostate and ovary. Low level in lung and kidney. Isoform B is highly expressed in hypothalamus, but also in skeletal muscle. Detected in fundic and antral epithelial cells of the gastric mucosa. Isoform B and isoform A are expressed by NK cells (at protein level).

Its subcellular location is the cell membrane. The protein localises to the basolateral cell membrane. It localises to the secreted. Functionally, receptor for hormone LEP/leptin. On ligand binding, mediates LEP central and peripheral effects through the activation of different signaling pathways such as JAK2/STAT3 and MAPK cascade/FOS. In the hypothalamus, LEP acts as an appetite-regulating factor that induces a decrease in food intake and an increase in energy consumption by inducing anorexinogenic factors and suppressing orexigenic neuropeptides, also regulates bone mass and secretion of hypothalamo-pituitary-adrenal hormones. In the periphery, increases basal metabolism, influences reproductive function, regulates pancreatic beta-cell function and insulin secretion, is pro-angiogenic and affects innate and adaptive immunity. Control of energy homeostasis and melanocortin production (stimulation of POMC and full repression of AgRP transcription) is mediated by STAT3 signaling, whereas distinct signals regulate NPY and the control of fertility, growth and glucose homeostasis. Involved in the regulation of counter-regulatory response to hypoglycemia by inhibiting neurons of the parabrachial nucleus. Has a specific effect on T lymphocyte responses, differentially regulating the proliferation of naive and memory T -ells. Leptin increases Th1 and suppresses Th2 cytokine production. May transport LEP across the blood-brain barrier. Binds LEP and mediates LEP endocytosis. Does not induce phosphorylation of and activate STAT3. In terms of biological role, antagonizes Isoform A and isoform B-mediated LEP binding and endocytosis. In Homo sapiens (Human), this protein is Leptin receptor (LEPR).